We begin with the raw amino-acid sequence, 689 residues long: DNA topoisomerase 1 (689 aa).

Residues 3 to 113 (DNLVIVESPA…KENRVVFNEI (111 aa)) enclose the Toprim domain. Positions 9 and 82 each coordinate Mg(2+). A Topo IA-type catalytic domain is found at 129–557 (EMNLVDAQQA…FFSSFKQDVE (429 aa)). The tract at residues 163 to 168 (SAGRVQ) is interaction with DNA. Residue Tyr298 is the O-(5'-phospho-DNA)-tyrosine intermediate of the active site. Positions 328–357 (SKRKASGKQGDQDAHEAIRPSSTMRTPDDM) are disordered. 3 C4-type zinc fingers span residues 577 to 603 (CEVCGSPMVIKMGRYGKFMACSNFPDC), 617 to 645 (CPKCNDGDVVERKSKKNRVFYGCSKYPEC), and 658 to 681 (CPKCNQYLVENKKGKTTQVICSNC).

The protein belongs to the type IA topoisomerase family. Monomer. Mg(2+) is required as a cofactor.

The enzyme catalyses ATP-independent breakage of single-stranded DNA, followed by passage and rejoining.. Releases the supercoiling and torsional tension of DNA, which is introduced during the DNA replication and transcription, by transiently cleaving and rejoining one strand of the DNA duplex. Introduces a single-strand break via transesterification at a target site in duplex DNA. The scissile phosphodiester is attacked by the catalytic tyrosine of the enzyme, resulting in the formation of a DNA-(5'-phosphotyrosyl)-enzyme intermediate and the expulsion of a 3'-OH DNA strand. The free DNA strand then undergoes passage around the unbroken strand, thus removing DNA supercoils. Finally, in the religation step, the DNA 3'-OH attacks the covalent intermediate to expel the active-site tyrosine and restore the DNA phosphodiester backbone. The protein is DNA topoisomerase 1 of Staphylococcus aureus (strain N315).